Consider the following 105-residue polypeptide: Met repressor (105 aa).

The protein belongs to the MetJ family. Homodimer.

The protein resides in the cytoplasm. Its function is as follows. This regulatory protein, when combined with SAM (S-adenosylmethionine) represses the expression of the methionine regulon and of enzymes involved in SAM synthesis. The sequence is that of Met repressor from Serratia proteamaculans (strain 568).